Reading from the N-terminus, the 200-residue chain is Protein GrpE (200 aa).

Residues 1 to 11 (MTDNDGQKDFS) are compositionally biased toward basic and acidic residues. The interval 1–43 (MTDNDGQKDFSEAAAENAGSKPGEPRVSKPYIMPDDPEETPSE) is disordered.

Belongs to the GrpE family. As to quaternary structure, homodimer.

It is found in the cytoplasm. Its function is as follows. Participates actively in the response to hyperosmotic and heat shock by preventing the aggregation of stress-denatured proteins, in association with DnaK and GrpE. It is the nucleotide exchange factor for DnaK and may function as a thermosensor. Unfolded proteins bind initially to DnaJ; upon interaction with the DnaJ-bound protein, DnaK hydrolyzes its bound ATP, resulting in the formation of a stable complex. GrpE releases ADP from DnaK; ATP binding to DnaK triggers the release of the substrate protein, thus completing the reaction cycle. Several rounds of ATP-dependent interactions between DnaJ, DnaK and GrpE are required for fully efficient folding. This is Protein GrpE from Afipia carboxidovorans (strain ATCC 49405 / DSM 1227 / KCTC 32145 / OM5) (Oligotropha carboxidovorans).